The sequence spans 355 residues: RGG repeats nuclear RNA binding protein A (355 aa).

Position 2 is an N-acetylalanine (alanine 2). Positions 26–225 are disordered; it reads KIDKSKKSGQ…VEEKEPEDKE (200 aa). The span at 37 to 47 shows a compositional bias: low complexity; that stretch reads SSLPAKSAPKL. Composition is skewed to gly residues over residues 67–81 and 114–141; these read RGGG…GRGG and GGGA…SNEG. The short motif at 132–139 is the Nuclear localization signal element; that stretch reads GRRGGFSN. Basic and acidic residues predominate over residues 143–168; it reads DGERPRRAFERRSGTGRGSDFKRDGS. An Arginine-rich RNA-binding motif E-R-P-R-R-X-[F/Y]-[E/D]-R-R-S motif is present at residues 145-155; sequence ERPRRAFERRS. The segment covering 177–190 has biased composition (low complexity); that stretch reads GEEIAAETEAVAGV. Composition is skewed to basic and acidic residues over residues 191-202 and 209-225; these read ETEKDVGEKPAV and ANKE…EDKE. The FF domain maps to 234 to 289; the sequence is ILEEKKKALQSLTTSERKVDTKVFESMQQLSNKKSNDEIFIKLGSDKDKRKDDKEE. Phosphoserine is present on serine 268. The segment covering 277–292 has biased composition (basic and acidic residues); it reads GSDKDKRKDDKEEKAK. A disordered region spans residues 277-355; it reads GSDKDKRKDD…AAQFPSLGGK (79 aa). Residues 323–333 show a composition bias toward gly residues; it reads GRGGVSSGESG. Serine 351 carries the phosphoserine modification.

It belongs to the SERBP1-HABP4 family. In terms of tissue distribution, expressed in seedlings, leaves, roots, inflorescences, and siliques. Constitutively expressed in seedlings and roots.

Its subcellular location is the cytoplasm. It is found in the perinuclear region. It localises to the nucleus. Its function is as follows. Ribosome-binding protein that acts as a regulator of mRNA translation by promoting ribosome inactivation. Binds RNA. Regulates responses to abscisic acid (ABA). Promotes stomata closure in drought conditions. Involved in resistance to salt and drought stresses via the accumulation of Pro. The protein is RGG repeats nuclear RNA binding protein A of Arabidopsis thaliana (Mouse-ear cress).